We begin with the raw amino-acid sequence, 260 residues long: MDIEQKQAEIIDQLVKRASTCKSEALGPLIIEATSHPSLFAFSEILALPNVAQLEGTTDSVYLDLLRLFAHGTWGDYKCNATRLPHLSPDQILKLKQLTVLTLAESNKVLPYDTLMVELDVSNVRELEDFLINECMYAGIVRGKLDQLKRCFEVPFAAGRDLRPGQLGNMLHTLSNWLNTSENLLISIQDKIKWADNMSEMDKKHRKEAEEGVEEVKKSLSMKGDVDIRGNKEMFGEPSGVMDYEEDGIRPKRRRHPVTR.

The region spanning 1–159 is the PCI domain; that stretch reads MDIEQKQAEI…RCFEVPFAAG (159 aa). Residues 228-260 are disordered; that stretch reads IRGNKEMFGEPSGVMDYEEDGIRPKRRRHPVTR. Residues 251-260 are compositionally biased toward basic residues; that stretch reads PKRRRHPVTR.

Belongs to the CSN7/EIF3M family. CSN7 subfamily. Component of the CSN complex, probably composed of CSN1, CSN2, CSN3, CSN4, CSN5 (CSN5A or CSN5B), CSN6 (CSN6A or CSN6B), CSN7 and CSN8. In the CSN complex, it probably interacts directly with CSN4. Interacts (via PCI domain) with CSN1 (via PCI domain) and CSN8 (via PCI domain), and (via C-terminal tail) with CSN6A, TSO2 and RNR2A. Cannot interact simultaneously with CSN1 and CSN8 to form ternary complexes. Also exists as a monomeric form. Binds to the translation initiation factors TIF3E1 and TIF3H1. Phosphorylated.

It localises to the cytoplasm. The protein localises to the nucleus. Its function is as follows. Component of the COP9 signalosome complex (CSN), a complex involved in various cellular and developmental processes such as photomorphogenesis and auxin and jasmonate responses. The CSN complex is an essential regulator of the ubiquitin (Ubl) conjugation pathway by mediating the deneddylation of the cullin subunits of SCF-type E3 ligase complexes, leading to decrease the Ubl ligase activity of SCF. It is involved in repression of photomorphogenesis in darkness by regulating the activity of COP1-containing Ubl ligase complexes. The complex is also required for degradation of IAA6 by regulating the activity of the Ubl ligase SCF-TIR complex. Regulates the TSO2 subcellular localization. May be involved in nucleic acid binding. The polypeptide is COP9 signalosome complex subunit 7 (CSN7) (Arabidopsis thaliana (Mouse-ear cress)).